Here is an 84-residue protein sequence, read N- to C-terminus: Small ribosomal subunit protein uS17 (84 aa).

Belongs to the universal ribosomal protein uS17 family. In terms of assembly, part of the 30S ribosomal subunit.

One of the primary rRNA binding proteins, it binds specifically to the 5'-end of 16S ribosomal RNA. The polypeptide is Small ribosomal subunit protein uS17 (Karelsulcia muelleri (strain GWSS) (Sulcia muelleri)).